Here is a 211-residue protein sequence, read N- to C-terminus: Dual specificity protein phosphatase 26 (211 aa).

The 148-residue stretch at N60 to Q207 folds into the Tyrosine-protein phosphatase domain. The Phosphocysteine intermediate role is filled by C152.

This sequence belongs to the protein-tyrosine phosphatase family. Non-receptor class dual specificity subfamily. Interacts with HSF4. As to expression, brain. In the brain it is expressed ubiquitously except in the hippocampus. Expressed in embryonal cancers (retinoblastoma, neuroepithilioma and neuroblastoma) and in anaplatic thyroid cancer.

The protein localises to the cytoplasm. It localises to the nucleus. The protein resides in the golgi apparatus. It catalyses the reaction O-phospho-L-tyrosyl-[protein] + H2O = L-tyrosyl-[protein] + phosphate. The enzyme catalyses O-phospho-L-seryl-[protein] + H2O = L-seryl-[protein] + phosphate. It carries out the reaction O-phospho-L-threonyl-[protein] + H2O = L-threonyl-[protein] + phosphate. Functionally, inactivates MAPK1 and MAPK3 which leads to dephosphorylation of heat shock factor protein 4 and a reduction in its DNA-binding activity. Inhibits MAP kinase p38 by dephosphorylating it and inhibits p38-mediated apoptosis in anaplastic thyroid cancer cells. Can also induce activation of MAP kinase p38 and c-Jun N-terminal kinase (JNK). This Homo sapiens (Human) protein is Dual specificity protein phosphatase 26 (DUSP26).